We begin with the raw amino-acid sequence, 844 residues long: 3',5'-cyclic-AMP phosphodiesterase 4A (844 aa).

A disordered region spans residues 1-124 (MEPPAAPSER…RSPLDSQASP (124 aa)). At S13 the chain carries Phosphoserine. Positions 36–46 (QPRTPIRIQQR) are enriched in low complexity. Over residues 51-78 (SAERSEPERSPHRPIERADAVDTGDRPG) the composition is skewed to basic and acidic residues. Over residues 82–91 (TRMSWPSSFH) the composition is skewed to polar residues. Residues S147, S152, S160, S204, and S333 each carry the phosphoserine modification. Residues 343 to 672 (VKTDQEDLLA…DWYHSAIRQS (330 aa)) enclose the PDEase domain. K344 is covalently cross-linked (Glycyl lysine isopeptide (Lys-Gly) (interchain with G-Cter in SUMO)). H419 (proton donor) is an active-site residue. A 3',5'-cyclic AMP-binding site is contributed by H419. AMP-binding residues include H419 and H423. Residues H423, H459, D460, and D577 each contribute to the Zn(2+) site. AMP is bound by residues D460, D577, Q628, and F631. Mg(2+) is bound at residue D460. D460 is a binding site for Mn(2+). 3',5'-cyclic AMP-binding residues include Q628 and F631. A phosphoserine mark is found at S672 and S674. The tract at residues 819-844 (ACSGTSGDNSAVISAPGRWGSGGDPA) is disordered. Positions 820-830 (CSGTSGDNSAV) are enriched in polar residues.

This sequence belongs to the cyclic nucleotide phosphodiesterase family. PDE4 subfamily. Interacts with LYN (via SH3 domain). Interacts with ARRB2. Requires Zn(2+) as cofactor. Mg(2+) is required as a cofactor. Mn(2+) serves as cofactor. Post-translationally, proteolytically cleaved by CASP3.

The protein resides in the cytoplasm. It is found in the cytosol. It localises to the membrane. The enzyme catalyses 3',5'-cyclic AMP + H2O = AMP + H(+). Its pathway is purine metabolism; 3',5'-cyclic AMP degradation; AMP from 3',5'-cyclic AMP: step 1/1. Inhibited by rolipram and diazepam. Hydrolyzes the second messenger 3',5'-cyclic AMP (cAMP), which is a key regulator of many important physiological processes. In terms of biological role, efficiently hydrolyzes cAMP. The protein is 3',5'-cyclic-AMP phosphodiesterase 4A (Pde4a) of Mus musculus (Mouse).